Reading from the N-terminus, the 149-residue chain is Large ribosomal subunit protein uL15 (149 aa).

Positions 8–49 (HDLRPAAGSNKPKTRVGRGEASKGKTAGRGTKGTGARKQVPA) are disordered. A compositionally biased stretch (low complexity) spans 31-45 (GKTAGRGTKGTGARK).

It belongs to the universal ribosomal protein uL15 family. As to quaternary structure, part of the 50S ribosomal subunit.

Functionally, binds to the 23S rRNA. This chain is Large ribosomal subunit protein uL15, found in Corynebacterium aurimucosum (strain ATCC 700975 / DSM 44827 / CIP 107346 / CN-1) (Corynebacterium nigricans).